The primary structure comprises 202 residues: Small ribosomal subunit protein uS4c (202 aa).

The 69-residue stretch at 90 to 158 (MRLDNIIFRL…MKRSRDSYEK (69 aa)) folds into the S4 RNA-binding domain.

The protein belongs to the universal ribosomal protein uS4 family. Part of the 30S ribosomal subunit. Contacts protein S5. The interaction surface between S4 and S5 is involved in control of translational fidelity.

The protein localises to the plastid. It localises to the chloroplast. Its function is as follows. One of the primary rRNA binding proteins, it binds directly to 16S rRNA where it nucleates assembly of the body of the 30S subunit. In terms of biological role, with S5 and S12 plays an important role in translational accuracy. The sequence is that of Small ribosomal subunit protein uS4c (rps4) from Anthoceros angustus (Hornwort).